Here is a 21-residue protein sequence, read N- to C-terminus: Thanatin (21 aa).

Cys-11 and Cys-18 form a disulfide bridge.

The protein resides in the secreted. Insect defense peptide with a broad spectrum of activity against Gram-positive and Gram-negative bacteria and fungi. No activity against S.aureus. Stops respiration in bacteria but does not permeabilize their inner membranes. The polypeptide is Thanatin (Podisus maculiventris (Spined soldier bug)).